Reading from the N-terminus, the 634-residue chain is Beta-ketoacyl-[acyl-carrier-protein] synthase FabY (634 aa).

The 469-residue stretch at 78-546 (ERIFASTLVR…GNNASGVVLS (469 aa)) folds into the Ketosynthase family 3 (KS3) domain. Catalysis depends on for beta-ketoacyl synthase activity residues cysteine 281, histidine 434, and histidine 472.

The protein belongs to the thiolase-like superfamily. Beta-ketoacyl-ACP synthases family. Homodimer.

It carries out the reaction malonyl-[ACP] + acetyl-CoA + H(+) = 3-oxobutanoyl-[ACP] + CO2 + CoA. It functions in the pathway lipid metabolism; fatty acid biosynthesis. Functionally, involved in the initiation of the fatty acid biosynthesis. Catalyzes the condensation of acetyl coenzyme A (acetyl-CoA) with malonyl-acyl carrier protein (ACP) to make the fatty acid synthesis (FAS) primer beta-acetoacetyl-ACP. It can also use short-chain acyl-CoA as substrates, including butyryl-CoA, and hexanoyl-CoA, but does not use any of the longer chain acyl-CoA substrates. The protein is Beta-ketoacyl-[acyl-carrier-protein] synthase FabY (fabY) of Pseudomonas aeruginosa (strain ATCC 15692 / DSM 22644 / CIP 104116 / JCM 14847 / LMG 12228 / 1C / PRS 101 / PAO1).